The primary structure comprises 61 residues: Large ribosomal subunit protein eL37 (61 aa).

Positions 19, 22, 34, and 37 each coordinate Zn(2+). A C4-type zinc finger spans residues 19 to 37 (CRRCGRNSFNVRKGYCAAC).

The protein belongs to the eukaryotic ribosomal protein eL37 family. Requires Zn(2+) as cofactor.

Functionally, binds to the 23S rRNA. This chain is Large ribosomal subunit protein eL37 (rpl37e), found in Sulfurisphaera tokodaii (strain DSM 16993 / JCM 10545 / NBRC 100140 / 7) (Sulfolobus tokodaii).